The primary structure comprises 439 residues: ATP-dependent RNA helicase RhlB (439 aa).

The Q motif signature appears at 9–37 (QKFADLPLHPEVKQALAENGFEFCTPIQA). Residues 40–219 (LPVLLQSKDI…YDHMNDPVKV (180 aa)) enclose the Helicase ATP-binding domain. 53–60 (AQTGTGKT) is a binding site for ATP. A DEAD box motif is present at residues 165–168 (DEAD). A Helicase C-terminal domain is found at 243 to 390 (KMRLLLTLIE…VSNYDRDALL (148 aa)). The disordered stretch occupies residues 395 to 439 (SPVKIHRKHPAGARNLRERSGAGRTPGAHRSGGRPPRHDRTRRQP). Residues 425–439 (SGGRPPRHDRTRRQP) show a composition bias toward basic residues.

It belongs to the DEAD box helicase family. RhlB subfamily. In terms of assembly, component of the RNA degradosome, which is a multiprotein complex involved in RNA processing and mRNA degradation.

The protein resides in the cytoplasm. It catalyses the reaction ATP + H2O = ADP + phosphate + H(+). Its function is as follows. DEAD-box RNA helicase involved in RNA degradation. Has RNA-dependent ATPase activity and unwinds double-stranded RNA. The protein is ATP-dependent RNA helicase RhlB of Shewanella oneidensis (strain ATCC 700550 / JCM 31522 / CIP 106686 / LMG 19005 / NCIMB 14063 / MR-1).